A 223-amino-acid chain; its full sequence is Mitochondrial cardiolipin hydrolase (223 aa).

The Mitochondrial intermembrane portion of the chain corresponds to M1–S6. Residues K7 to V24 form a helical membrane-spanning segment. Residues A25–K223 lie on the Cytoplasmic side of the membrane. The 28-residue stretch at T164–A191 folds into the PLD phosphodiesterase domain. Catalysis depends on residues H169, K171, and D176.

The protein belongs to the phospholipase D family. MitoPLD/Zucchini subfamily. Homodimer.

Its subcellular location is the mitochondrion outer membrane. In terms of biological role, plays a critical role in PIWI-interacting RNA (piRNA) biogenesis. piRNAs provide essential protection against the activity of mobile genetic elements. piRNA-mediated transposon silencing is thus critical for maintaining genome stability. Backbone-non-specific, single strand-specific nuclease, cleaving either RNA or DNA substrates with similar affinity. Produces 5' phosphate and 3' hydroxyl termini, suggesting it could directly participate in the processing of primary piRNA transcripts. Has been proposed to act as a cardiolipin hydrolase to generate phosphatidic acid at mitochondrial surface. Although it cannot be excluded that it can act as a phospholipase in some circumstances, this activity could not be confirmed. This is Mitochondrial cardiolipin hydrolase from Chlamydomonas reinhardtii (Chlamydomonas smithii).